We begin with the raw amino-acid sequence, 290 residues long: Ribosomal protein L11 methyltransferase (290 aa).

S-adenosyl-L-methionine-binding residues include Thr-135, Gly-158, Asp-180, and Asn-227.

It belongs to the methyltransferase superfamily. PrmA family.

It localises to the cytoplasm. The enzyme catalyses L-lysyl-[protein] + 3 S-adenosyl-L-methionine = N(6),N(6),N(6)-trimethyl-L-lysyl-[protein] + 3 S-adenosyl-L-homocysteine + 3 H(+). Methylates ribosomal protein L11. The sequence is that of Ribosomal protein L11 methyltransferase from Chelativorans sp. (strain BNC1).